The following is a 1481-amino-acid chain: Neuropathy target esterase sws (1481 aa).

Residues 1–34 (MDVLELLRASANGCYNTIFSDAWSQYVSQQITSS) are Lumenal-facing. The chain crosses the membrane as a helical span at residues 35–55 (LYLYIALGILTVLFVAWFIYF). Topologically, residues 56-1481 (KRLARLRLRD…KENKNVNTKN (1426 aa)) are cytoplasmic. 175–302 (IFGHFEKPVF…IRVIQVIMIR (128 aa)) is a binding site for a nucleoside 3',5'-cyclic phosphate. A disordered region spans residues 336-420 (HLNSQSQSSQ…NNVQLPEVHG (85 aa)). Low complexity-rich tracts occupy residues 339 to 379 (SQSQ…LPLQ) and 401 to 412 (SGPNPNPNSGNN). S448 bears the Phosphoserine mark. A nucleoside 3',5'-cyclic phosphate-binding positions include 492-624 (ELGL…VVRR) and 613-740 (IVLD…LSHR). The PNPLA domain maps to 967–1133 (LVLGGGGARG…VNNLPGHLWR (167 aa)). The short motif at 971-976 (GGGARG) is the GXGXXG element. A GXSXG motif is present at residues 998–1002 (GVSIG). S1000 functions as the Nucleophile in the catalytic mechanism. D1120 functions as the Proton acceptor in the catalytic mechanism. A DGA/G motif is present at residues 1120-1122 (DGG). A Phosphoserine modification is found at S1214. Residues 1366 to 1481 (LSLSEAEMDS…KENKNVNTKN (116 aa)) are disordered. Basic and acidic residues-rich tracts occupy residues 1379–1390 (IDFRSDSKKDKA) and 1400–1410 (KDNEDKTDAVD). The segment covering 1445–1457 (TNTMTTQTTSPTT) has biased composition (low complexity).

Belongs to the NTE family. In terms of assembly, interacts with Pka-C3; interaction inhibits the catalytic function of Pka-C3 and the esterase activity of sws.

The protein localises to the endoplasmic reticulum membrane. It catalyses the reaction a 1-acyl-sn-glycero-3-phosphocholine + H2O = sn-glycerol 3-phosphocholine + a fatty acid + H(+). In terms of biological role, phospholipase B that deacylates intracellular phosphatidylcholine (PtdCho), generating glycerophosphocholine (GroPtdCho). This deacylation occurs at both sn-2 and sn-1 positions of PtdCho. Its specific chemical modification by certain organophosphorus (OP) compounds leads to distal axonopathy. Plays a role in the signaling mechanism between neurons and glia that regulates glia wrapping during development of the adult brain. Essential for membrane lipid homeostasis and cell survival in both neurons and glia of the adult brain. The sequence is that of Neuropathy target esterase sws from Drosophila willistoni (Fruit fly).